The primary structure comprises 589 residues: uncharacterized protein (589 aa).

The next 14 membrane-spanning stretches (helical) occupy residues 90 to 110 (YIVI…QTVI), 128 to 148 (SWIG…CGIM), 162 to 182 (IVLF…LWLV), 189 to 209 (GIGG…ITPL), 217 to 237 (GCMG…GGAI), 245 to 265 (WIFF…IFFL), 284 to 304 (FVGI…LNIG), 311 to 331 (AHAN…GFVV), 355 to 375 (VMVT…YIPI), 390 to 410 (VHTL…GMGI), 418 to 438 (YPMI…IAIY), 448 to 468 (GFLA…LIAI), 483 to 503 (AFML…AVIY), and 545 to 565 (IRTI…LSFF).

This sequence belongs to the major facilitator superfamily. TCR/Tet family.

Its subcellular location is the membrane. This is an uncharacterized protein from Schizosaccharomyces pombe (strain 972 / ATCC 24843) (Fission yeast).